The primary structure comprises 448 residues: Proline-rich protein 4 (448 aa).

The N-terminal stretch at 1–29 (MRILPEPRGSVPCLLLLVSVLLSATLSLA) is a signal peptide. Repeat copies occupy residues 152-156 (PMPKL), 157-161 (PPFKG), 165-169 (PFPLP), 170-174 (PPLEL), 175-179 (PPFLK), 183-187 (PPKYS), 188-193 (PPVEVP), 194-198 (PPVPV), 201-205 (PPPKK), 208-212 (PPPVP), 216-220 (PPPKK), 222-226 (VPPPV), 227-231 (PVYKP), 232-236 (PPKVE), 238-242 (PPPIP), 245-249 (PCPPK), 250-254 (PPKIE), 256-259 (PPPV), 260-264 (PVYKP), 265-270 (PPKIEK), 271-278 (PPPVPVYK), 279-284 (PPPKIE), 286-294 (PPPVPVHKL), 295-299 (PKKPC), 300-304 (PPKKV), 306-311 (PPPVPV), 314-320 (PPTKKPC), 321-327 (PPKKVDP), 328-334 (PPVPVHK), 335-341 (PPPKIVI), 342-348 (PPPKIEH), 349-356 (PPPVPVYK), 357-363 (PPPKIEH), 364-368 (PPIYI), 369-374 (PPIVKK), 378-384 (PPVPIYK), 385-389 (PPVVI), 390-394 (PKKPC), 395-402 (PPPVPVYK), 403-407 (PPVVV), 409-413 (PKKPC), 414-419 (PPLPQL), 420-424 (PPLPK), 425-429 (FPPLP), 430-434 (PKYIH), and 442-446 (PPLPP). Residues 152-446 (PMPKLPPFKG…KFGKWPPLPP (295 aa)) form a 46 X 5 AA approximate repeats region. Residues 240 to 290 (PIPKKPCPPKPPKIEHPPPVPVYKPPPKIEKPPPVPVYKPPPKIEHPPPVP) show a composition bias toward pro residues. The tract at residues 240 to 345 (PIPKKPCPPK…PPKIVIPPPK (106 aa)) is disordered. Pro residues-rich tracts occupy residues 306–319 (PPPV…TKKP) and 327–345 (PPPV…PPPK).

This sequence belongs to the plant proline-rich protein superfamily. Mostly expressed in aerial organs, particularly in expanding leaves, stems, flowers, and siliques. Also present in stipules.

It localises to the secreted. The protein localises to the cell wall. The protein is Proline-rich protein 4 (PRP4) of Arabidopsis thaliana (Mouse-ear cress).